Reading from the N-terminus, the 244-residue chain is Probable transcriptional regulatory protein CHAB381_1426 (244 aa).

It belongs to the TACO1 family.

Its subcellular location is the cytoplasm. This Campylobacter hominis (strain ATCC BAA-381 / DSM 21671 / CCUG 45161 / LMG 19568 / NCTC 13146 / CH001A) protein is Probable transcriptional regulatory protein CHAB381_1426.